A 213-amino-acid chain; its full sequence is Glycerol-3-phosphate acyltransferase (213 aa).

The next 6 helical transmembrane spans lie at 3-23, 48-68, 71-91, 119-139, 144-164, and 165-185; these read IIIL…GLWI, ILGV…GTLA, LPLI…LAVI, PFFL…FSMI, VVAA…GFIL, and TSYD…IIFR.

It belongs to the PlsY family. As to quaternary structure, probably interacts with PlsX.

The protein localises to the cell membrane. It catalyses the reaction an acyl phosphate + sn-glycerol 3-phosphate = a 1-acyl-sn-glycero-3-phosphate + phosphate. The protein operates within lipid metabolism; phospholipid metabolism. Its function is as follows. Catalyzes the transfer of an acyl group from acyl-phosphate (acyl-PO(4)) to glycerol-3-phosphate (G3P) to form lysophosphatidic acid (LPA). This enzyme utilizes acyl-phosphate as fatty acyl donor, but not acyl-CoA or acyl-ACP. The sequence is that of Glycerol-3-phosphate acyltransferase from Lactococcus lactis subsp. cremoris (strain MG1363).